The sequence spans 209 residues: Imidazole glycerol phosphate synthase subunit HisH (209 aa).

One can recognise a Glutamine amidotransferase type-1 domain in the interval 1 to 205 (MIAIIDYGMG…KGVVEAWKSS (205 aa)). The Nucleophile role is filled by cysteine 79. Catalysis depends on residues histidine 180 and glutamate 182.

In terms of assembly, heterodimer of HisH and HisF.

The protein resides in the cytoplasm. The enzyme catalyses 5-[(5-phospho-1-deoxy-D-ribulos-1-ylimino)methylamino]-1-(5-phospho-beta-D-ribosyl)imidazole-4-carboxamide + L-glutamine = D-erythro-1-(imidazol-4-yl)glycerol 3-phosphate + 5-amino-1-(5-phospho-beta-D-ribosyl)imidazole-4-carboxamide + L-glutamate + H(+). It carries out the reaction L-glutamine + H2O = L-glutamate + NH4(+). It participates in amino-acid biosynthesis; L-histidine biosynthesis; L-histidine from 5-phospho-alpha-D-ribose 1-diphosphate: step 5/9. In terms of biological role, IGPS catalyzes the conversion of PRFAR and glutamine to IGP, AICAR and glutamate. The HisH subunit catalyzes the hydrolysis of glutamine to glutamate and ammonia as part of the synthesis of IGP and AICAR. The resulting ammonia molecule is channeled to the active site of HisF. The polypeptide is Imidazole glycerol phosphate synthase subunit HisH (Bacillus mycoides (strain KBAB4) (Bacillus weihenstephanensis)).